The chain runs to 1240 residues: DNA excision repair protein ERCC-6-like (1240 aa).

Serine 14 carries the post-translational modification Phosphoserine. A TPR 1 repeat occupies 21–54 (YLRYVQEAKEAAKNGDLEESLKLFNLAKDIFPTK). In terms of domain architecture, Helicase ATP-binding spans 110–278 (SLYKDGRKGG…WSLFDFACQG (169 aa)). 123–130 (DDMGLGKT) is a binding site for ATP. A DEAH box motif is present at residues 229-232 (DEAH). The Helicase C-terminal domain occupies 467–631 (FLMSLLERLQ…FTKQELKELF (165 aa)). Positions 736–760 (FPSQQKKKGTEFNKPQPQPSRLLTK) are disordered. Polar residues predominate over residues 748–760 (NKPQPQPSRLLTK). 2 positions are modified to phosphoserine: serine 755 and serine 773. A disordered region spans residues 778–813 (DQSAESEPQEHSEVHDVTSLQGSHHFNSTSDAGTIA). A compositionally biased stretch (polar residues) spans 795–809 (TSLQGSHHFNSTSDA). Serine 821 carries the phosphoserine modification. The disordered stretch occupies residues 845-879 (QKKGLQASPGQEAPSENLGSFHYLPRESSKASLGP). A phosphoserine mark is found at serine 966, serine 998, serine 1001, and serine 1021. Positions 974–1085 (KEKSLQSPAA…EVNTSLHSRR (112 aa)) are disordered. Positions 978–998 (LQSPAANSRAKSALTLSLDSS) are enriched in polar residues. A compositionally biased stretch (polar residues) spans 1049–1065 (SVKQFDASTPQSGSNPS). Threonine 1057 is subject to Phosphothreonine. Phosphoserine occurs at positions 1092 and 1112. The segment covering 1104 to 1117 (MEERLDNSSEEESE) has biased composition (acidic residues). A disordered region spans residues 1104–1185 (MEERLDNSSE…MPDPPQDLAV (82 aa)). Residues 1135-1165 (EQPSGATLASGNKSSNLTMSEPTSPAPQSSP) show a composition bias toward polar residues. Residue serine 1172 is modified to Phosphoserine. The stretch at 1191 to 1224 (YESLVARGKELKECGKIQEALNCLVKALDIKSAD) is one TPR 2 repeat.

It belongs to the SNF2/RAD54 helicase family. In terms of assembly, interacts with PLK1, which phosphorylates it. Both proteins are mutually dependent on each other for correct subcellular localization. Interacts (via N-terminal TPR repeat) with BEND3 (via BEN domains 1 and 3); the interaction is direct. Post-translationally, phosphorylation by PLK1 prevents the association with chromosome arms and restricts its localization to the kinetochore-centromere region. In terms of tissue distribution, expressed mainly in the neural tube and heart of 10.5 dpc embryo. Significantly down-regulated after alcohol exposure in embryonic brain and heart, but not in embryonic kidney, liver, or lung.

The protein resides in the chromosome. It localises to the centromere. It is found in the kinetochore. It catalyses the reaction ATP + H2O = ADP + phosphate + H(+). Its function is as follows. DNA helicase that acts as a tension sensor that associates with catenated DNA which is stretched under tension until it is resolved during anaphase. Functions as ATP-dependent DNA translocase. Can promote Holliday junction branch migration (in vitro). The chain is DNA excision repair protein ERCC-6-like (Ercc6l) from Mus musculus (Mouse).